The chain runs to 88 residues: DNA-directed RNA polymerase subunit omega (88 aa).

The protein belongs to the RNA polymerase subunit omega family. In terms of assembly, the RNAP catalytic core consists of 2 alpha, 1 beta, 1 beta' and 1 omega subunit. When a sigma factor is associated with the core the holoenzyme is formed, which can initiate transcription.

The catalysed reaction is RNA(n) + a ribonucleoside 5'-triphosphate = RNA(n+1) + diphosphate. Functionally, promotes RNA polymerase assembly. Latches the N- and C-terminal regions of the beta' subunit thereby facilitating its interaction with the beta and alpha subunits. This Haemophilus influenzae (strain 86-028NP) protein is DNA-directed RNA polymerase subunit omega.